The following is a 44-amino-acid chain: KAKCADIDQPCKTSCDCCETKGACTCYKSGCVCRMGSFXATCKK.

Cystine bridges form between Cys4-Cys18, Cys11-Cys24, Cys15-Cys42, Cys17-Cys33, and Cys26-Cys31.

As to expression, expressed by the venom gland.

The protein resides in the secreted. Neurotoxin. Causes spastic paralysis and death in mice within 10 minutes at dose levels of 3 ug per mouse. In Phoneutria keyserlingi (Brazilian wandering spider), this protein is U4-ctenitoxin-Pk1a.